A 315-amino-acid polypeptide reads, in one-letter code: NADH-cytochrome b5 reductase-like (315 aa).

In terms of domain architecture, Oxidoreductase-like spans 19-55 (RPTEPLPSQCCGSGCSPCVFDLYHRDLARWEAAQASK). The FAD-binding FR-type domain maps to 75-177 (ETFVAFCIIA…RGPFGDFFYK (103 aa)). Residues 157 to 172 (ESWRVGDTAFWRGPFG) and 182 to 214 (GELLLLAAGTGLAPMVPILQSITDNENDETFVT) each bind FAD.

Belongs to the flavoprotein pyridine nucleotide cytochrome reductase family. Requires FAD as cofactor.

The enzyme catalyses 2 Fe(III)-[cytochrome b5] + NADH = 2 Fe(II)-[cytochrome b5] + NAD(+) + H(+). NADH-cytochrome b5 reductases are involved in desaturation and elongation of fatty acids, cholesterol biosynthesis, drug metabolism, and, in erythrocyte, methemoglobin reduction. This Homo sapiens (Human) protein is NADH-cytochrome b5 reductase-like (CYB5RL).